Reading from the N-terminus, the 118-residue chain is UPF0102 protein Cphy_2398 (118 aa).

The protein belongs to the UPF0102 family.

The protein is UPF0102 protein Cphy_2398 of Lachnoclostridium phytofermentans (strain ATCC 700394 / DSM 18823 / ISDg) (Clostridium phytofermentans).